A 175-amino-acid chain; its full sequence is Homeobox expressed in ES cells 1 (175 aa).

The disordered stretch occupies residues 1–44 (MSPNLQEGARLVEGKPSSTSFSIESILGLDQKKDDAPSMKPHRP). The homeobox DNA-binding region spans 108 to 167 (GRRPRTAFTQNQVEVLENVFRVNCYPGIDIREDLARKLNLEEDRIQIWFQNRRAKLKRSH).

The protein belongs to the ANF homeobox family. In terms of assembly, interacts with TLE1.

The protein resides in the nucleus. Its function is as follows. Required for the normal development of the forebrain, eyes and other anterior structures such as the olfactory placodes and pituitary gland. Possible transcriptional repressor. Binds to the palindromic PIII sequence, 5'-AGCTTGAGTCTAATTGAATTAACTGTAC-3'. This is Homeobox expressed in ES cells 1 (HESX1) from Oryctolagus cuniculus (Rabbit).